We begin with the raw amino-acid sequence, 345 residues long: Ribonucleoside-diphosphate reductase subunit beta (345 aa).

Positions 88, 118, and 121 each coordinate Fe cation. The active site involves Y125. Residues E185, E219, and H222 each coordinate Fe cation.

This sequence belongs to the ribonucleoside diphosphate reductase small chain family. In terms of assembly, tetramer of two alpha and two beta subunits. Fe cation is required as a cofactor.

The catalysed reaction is a 2'-deoxyribonucleoside 5'-diphosphate + [thioredoxin]-disulfide + H2O = a ribonucleoside 5'-diphosphate + [thioredoxin]-dithiol. Functionally, provides the precursors necessary for DNA synthesis. Catalyzes the biosynthesis of deoxyribonucleotides from the corresponding ribonucleotides. The sequence is that of Ribonucleoside-diphosphate reductase subunit beta (nrdB) from Halalkalibacterium halodurans (strain ATCC BAA-125 / DSM 18197 / FERM 7344 / JCM 9153 / C-125) (Bacillus halodurans).